We begin with the raw amino-acid sequence, 444 residues long: Platelet-activating factor acetylhydrolase (444 aa).

The first 21 residues, 1–21, serve as a signal peptide directing secretion; sequence MLPPKLHALFCLCSCLTLVHP. N-linked (GlcNAc...) asparagine glycosylation is found at Asn60 and Asn200. Ser274 functions as the Nucleophile in the catalytic mechanism. Residues Asp297 and His352 each act as charge relay system in the active site. Asn424 is a glycosylation site (N-linked (GlcNAc...) asparagine).

This sequence belongs to the AB hydrolase superfamily. Lipase family. In terms of processing, N-glycosylated. In terms of tissue distribution, plasma.

The protein localises to the secreted. The protein resides in the extracellular space. It carries out the reaction a 1-O-alkyl-2-acetyl-sn-glycero-3-phosphocholine + H2O = a 1-O-alkyl-sn-glycero-3-phosphocholine + acetate + H(+). The enzyme catalyses 1-O-decyl-2-acetyl-sn-glycero-3-phosphocholine + H2O = 1-O-decyl-sn-glycero-3-phosphocholine + acetate + H(+). The catalysed reaction is 1-O-dodecyl-2-acetyl-sn-glycero-3-phosphocholine + H2O = 1-O-dodecyl-sn-glycero-3-phosphocholine + acetate + H(+). It catalyses the reaction 1-O-tetradecyl-2-acetyl-sn-glycero-3-phosphocholine + H2O = 1-O-tetradecyl-sn-glycero-3-phosphocholine + acetate + H(+). It carries out the reaction 1-O-hexadecyl-2-acetyl-sn-glycero-3-phosphocholine + H2O = 1-O-hexadecyl-sn-glycero-3-phosphocholine + acetate + H(+). The enzyme catalyses 1-O-octadecyl-2-acetyl-sn-glycero-3-phosphocholine + H2O = 1-O-octadecyl-sn-glycero-3-phosphocholine + acetate + H(+). The catalysed reaction is 1-hexadecanoyl-2-acetyl-sn-glycero-3-phosphocholine + H2O = 1-hexadecanoyl-sn-glycero-3-phosphocholine + acetate + H(+). It catalyses the reaction 1-hexadecanoyl-2-propionyl-sn-glycero-3-phosphocholine + H2O = propanoate + 1-hexadecanoyl-sn-glycero-3-phosphocholine + H(+). It carries out the reaction 1-hexadecanoyl-2-butanoyl-sn-glycero-3-phosphocholine + H2O = butanoate + 1-hexadecanoyl-sn-glycero-3-phosphocholine + H(+). The enzyme catalyses 1-hexadecanoyl-2-pentanoyl-sn-glycero-3-phosphocholine + H2O = pentanoate + 1-hexadecanoyl-sn-glycero-3-phosphocholine + H(+). The catalysed reaction is 1-hexadecanoyl-2-glutaroyl-sn-glycero-3-phosphocholine + H2O = glutarate + 1-hexadecanoyl-sn-glycero-3-phosphocholine + H(+). It catalyses the reaction 1-hexadecanoyl-2-(5-oxopentanoyl)-sn-glycero-3-phosphocholine + H2O = 5-oxopentanoate + 1-hexadecanoyl-sn-glycero-3-phosphocholine + H(+). It carries out the reaction 1-hexadecanoyl-2-(9-oxononanoyl)-sn-glycero-3-phosphocholine + H2O = 9-oxononanoate + 1-hexadecanoyl-sn-glycero-3-phosphocholine + H(+). The enzyme catalyses 1-hexadecanoyl-2-[9-hydroperoxy-(10E-octadecenoyl)]-sn-glycero-3-phosphocholine + H2O = 9-hydroperoxy-10E-octadecenoate + 1-hexadecanoyl-sn-glycero-3-phosphocholine + H(+). The catalysed reaction is 1-hexadecanoyl-2-(10-hydroperoxy-8E-octadecenoyl)-sn-glycero-3-phosphocholine + H2O = 10-hydroperoxy-(8E)-octadecenoate + 1-hexadecanoyl-sn-glycero-3-phosphocholine + H(+). Lipoprotein-associated calcium-independent phospholipase A2 involved in phospholipid catabolism during inflammatory and oxidative stress response. At the lipid-aqueous interface, hydrolyzes the ester bond of fatty acyl group attached at sn-2 position of phospholipids (phospholipase A2 activity). Specifically targets phospholipids with a short-chain fatty acyl group at sn-2 position. Can hydrolyze phospholipids with long fatty acyl chains, only if they carry oxidized functional groups. Hydrolyzes and inactivates platelet-activating factor (PAF, 1-O-alkyl-2-acetyl-sn-glycero-3-phosphocholine), a potent pro-inflammatory signaling lipid that acts through PTAFR on various innate immune cells. Hydrolyzes oxidatively truncated phospholipids carrying an aldehyde group at omega position, preventing their accumulation in low-density lipoprotein (LDL) particles and uncontrolled pro-inflammatory effects. As part of high-density lipoprotein (HDL) particles, can hydrolyze phospholipids having long-chain fatty acyl hydroperoxides at sn-2 position and protect against potential accumulation of these oxylipins in the vascular wall. Catalyzes the release from membrane phospholipids of F2-isoprostanes, lipid biomarkers of cellular oxidative damage. The sequence is that of Platelet-activating factor acetylhydrolase (PLA2G7) from Canis lupus familiaris (Dog).